We begin with the raw amino-acid sequence, 511 residues long: 2,3-bisphosphoglycerate-independent phosphoglycerate mutase (511 aa).

Mn(2+) is bound at residue D12. Y36 is modified (phosphotyrosine). S62 is a binding site for Mn(2+). The Phosphoserine intermediate role is filled by S62. Substrate contacts are provided by residues H123, 153–154 (RD), R185, R191, 261–264 (RPDR), and K336. Mn(2+) contacts are provided by D403, H407, D444, H445, and H462.

Belongs to the BPG-independent phosphoglycerate mutase family. In terms of assembly, monomer. Mn(2+) is required as a cofactor.

It carries out the reaction (2R)-2-phosphoglycerate = (2R)-3-phosphoglycerate. It participates in carbohydrate degradation; glycolysis; pyruvate from D-glyceraldehyde 3-phosphate: step 3/5. Catalyzes the interconversion of 2-phosphoglycerate and 3-phosphoglycerate. The polypeptide is 2,3-bisphosphoglycerate-independent phosphoglycerate mutase (Geobacillus kaustophilus (strain HTA426)).